Consider the following 278-residue polypeptide: 3-methyl-2-oxobutanoate hydroxymethyltransferase 1 (278 aa).

Aspartate 49 and aspartate 88 together coordinate Mg(2+). 3-methyl-2-oxobutanoate is bound by residues 49-50, aspartate 88, and lysine 118; that span reads DS. Glutamate 120 contacts Mg(2+). Glutamate 187 functions as the Proton acceptor in the catalytic mechanism.

This sequence belongs to the PanB family. As to quaternary structure, homodecamer; pentamer of dimers. The cofactor is Mg(2+).

It is found in the cytoplasm. It catalyses the reaction 3-methyl-2-oxobutanoate + (6R)-5,10-methylene-5,6,7,8-tetrahydrofolate + H2O = 2-dehydropantoate + (6S)-5,6,7,8-tetrahydrofolate. Its pathway is cofactor biosynthesis; (R)-pantothenate biosynthesis; (R)-pantoate from 3-methyl-2-oxobutanoate: step 1/2. Its function is as follows. Catalyzes the reversible reaction in which hydroxymethyl group from 5,10-methylenetetrahydrofolate is transferred onto alpha-ketoisovalerate to form ketopantoate. The polypeptide is 3-methyl-2-oxobutanoate hydroxymethyltransferase 1 (Hahella chejuensis (strain KCTC 2396)).